The sequence spans 525 residues: WD repeat-containing protein JIP5 (525 aa).

WD repeat units follow at residues 28–69 (VFDE…RILN), 121–160 (RHKG…VMKK), 211–251 (HNGD…ESDA), 270–310 (QEDE…LVDQ), and 358–398 (RKHS…DDEE). Residues 396–525 (DEEGKINESY…EHGIRKFEGL (130 aa)) form a disordered region. The segment covering 410–424 (SDNDNGFDSDADSNS) has biased composition (acidic residues). Positions 425 to 435 (DSESVSSSDVD) are enriched in low complexity. A compositionally biased stretch (basic and acidic residues) spans 463-484 (SKDELLAELEKDLQSSDEDSKH). The span at 485-501 (YTKRTKSTQPKKLKKQK) shows a compositional bias: basic residues. Over residues 513 to 525 (QKHEHGIRKFEGL) the composition is skewed to basic and acidic residues.

The protein belongs to the WD repeat WDR55 family.

The protein localises to the nucleus. It localises to the nucleolus. This is WD repeat-containing protein JIP5 (JIP5) from Kluyveromyces lactis (strain ATCC 8585 / CBS 2359 / DSM 70799 / NBRC 1267 / NRRL Y-1140 / WM37) (Yeast).